The following is a 65-amino-acid chain: uncharacterized protein (65 aa).

This is an uncharacterized protein from Acidianus filamentous virus 1 (isolate United States/Yellowstone) (AFV-1).